The chain runs to 376 residues: Actin-related protein T1 (376 aa).

The protein belongs to the actin family. As to expression, in skin, expressed in the basal, spinous and granular layers of the epidermis. Also expressed in hair follicles, sebaceaous glands, eccrine sweat glands and semen.

It localises to the cytoplasm. The protein resides in the cytoskeleton. Its subcellular location is the nucleus. It is found in the cytoplasmic vesicle. The protein localises to the secretory vesicle. It localises to the acrosome. Functionally, negatively regulates the Hedgehog (SHH) signaling. Binds to the promoter of the SHH signaling mediator, GLI1, and inhibits its expression. The sequence is that of Actin-related protein T1 from Homo sapiens (Human).